A 615-amino-acid polypeptide reads, in one-letter code: Probable ATP-citrate synthase subunit 1 (615 aa).

Residues 221 to 241 (LIRF…EVGG) and 272 to 298 (FKTE…KNQA) each bind ATP. Glu238 contributes to the Mg(2+) binding site. The active-site Tele-phosphohistidine intermediate is His280. 299-309 (MREAGIYVPET) contributes to the CoA binding site. Phosphoserine is present on Ser359.

The protein belongs to the succinate/malate CoA ligase alpha subunit family. As to quaternary structure, composed of two subunits.

The protein localises to the cytoplasm. The enzyme catalyses oxaloacetate + acetyl-CoA + ADP + phosphate = citrate + ATP + CoA. Functionally, catalyzes the formation of cytosolic acetyl-CoA, which is mainly used for the biosynthesis of fatty acids and sterols. In Schizosaccharomyces pombe (strain 972 / ATCC 24843) (Fission yeast), this protein is Probable ATP-citrate synthase subunit 1.